Here is a 466-residue protein sequence, read N- to C-terminus: Ribulose bisphosphate carboxylase large chain (466 aa).

Residue Lys-5 is modified to N6,N6,N6-trimethyllysine. Residues Asn-114 and Thr-164 each contribute to the substrate site. Catalysis depends on Lys-166, which acts as the Proton acceptor. Lys-168 provides a ligand contact to substrate. The Mg(2+) site is built by Lys-192, Asp-194, and Glu-195. Lys-192 is modified (N6-carboxylysine). The Proton acceptor role is filled by His-285. Substrate is bound by residues Arg-286, His-318, and Ser-370.

It belongs to the RuBisCO large chain family. Type I subfamily. In terms of assembly, heterohexadecamer of 8 large chains and 8 small chains; disulfide-linked. The disulfide link is formed within the large subunit homodimers. Requires Mg(2+) as cofactor. In terms of processing, the disulfide bond which can form in the large chain dimeric partners within the hexadecamer appears to be associated with oxidative stress and protein turnover.

It localises to the plastid. It is found in the chloroplast. The enzyme catalyses 2 (2R)-3-phosphoglycerate + 2 H(+) = D-ribulose 1,5-bisphosphate + CO2 + H2O. It catalyses the reaction D-ribulose 1,5-bisphosphate + O2 = 2-phosphoglycolate + (2R)-3-phosphoglycerate + 2 H(+). In terms of biological role, ruBisCO catalyzes two reactions: the carboxylation of D-ribulose 1,5-bisphosphate, the primary event in carbon dioxide fixation, as well as the oxidative fragmentation of the pentose substrate in the photorespiration process. Both reactions occur simultaneously and in competition at the same active site. The sequence is that of Ribulose bisphosphate carboxylase large chain from Berzelia lanuginosa (Buttonbush).